A 328-amino-acid polypeptide reads, in one-letter code: RING finger protein 175 (328 aa).

5 helical membrane passes run 51–71, 83–103, 104–121, 149–169, and 180–200; these read MHVE…IVLV, LVTL…LYWW, RFLS…YILF, AFGV…NLFF, and GIVS…FAEI. The RING-type; atypical zinc-finger motif lies at 227–277; it reads CAVCGQKIIVELDEEGLIENTYQLSCNHVFHEFCIRGWCIVGKKQTCPYCK.

It is found in the membrane. The polypeptide is RING finger protein 175 (RNF175) (Homo sapiens (Human)).